The following is a 346-amino-acid chain: Ketol-acid reductoisomerase (NADP(+)) (346 aa).

Residues 1–189 form the KARI N-terminal Rossmann domain; sequence MQVYYDRDAD…GGGRSGIIET (189 aa). NADP(+)-binding positions include 24–27, arginine 48, serine 51, threonine 53, and 83–86; these read YGSQ and DEHQ. Histidine 108 is an active-site residue. An NADP(+)-binding site is contributed by glycine 134. In terms of domain architecture, KARI C-terminal knotted spans 190–335; it reads TFKEECETDL…EKLRAMMPWI (146 aa). 4 residues coordinate Mg(2+): aspartate 198, glutamate 202, glutamate 234, and glutamate 238. Substrate is bound at residue serine 259.

It belongs to the ketol-acid reductoisomerase family. Requires Mg(2+) as cofactor.

It carries out the reaction (2R)-2,3-dihydroxy-3-methylbutanoate + NADP(+) = (2S)-2-acetolactate + NADPH + H(+). It catalyses the reaction (2R,3R)-2,3-dihydroxy-3-methylpentanoate + NADP(+) = (S)-2-ethyl-2-hydroxy-3-oxobutanoate + NADPH + H(+). It functions in the pathway amino-acid biosynthesis; L-isoleucine biosynthesis; L-isoleucine from 2-oxobutanoate: step 2/4. Its pathway is amino-acid biosynthesis; L-valine biosynthesis; L-valine from pyruvate: step 2/4. Functionally, involved in the biosynthesis of branched-chain amino acids (BCAA). Catalyzes an alkyl-migration followed by a ketol-acid reduction of (S)-2-acetolactate (S2AL) to yield (R)-2,3-dihydroxy-isovalerate. In the isomerase reaction, S2AL is rearranged via a Mg-dependent methyl migration to produce 3-hydroxy-3-methyl-2-ketobutyrate (HMKB). In the reductase reaction, this 2-ketoacid undergoes a metal-dependent reduction by NADPH to yield (R)-2,3-dihydroxy-isovalerate. In Sphingopyxis alaskensis (strain DSM 13593 / LMG 18877 / RB2256) (Sphingomonas alaskensis), this protein is Ketol-acid reductoisomerase (NADP(+)).